We begin with the raw amino-acid sequence, 299 residues long: Centriolar and ciliogenesis-associated protein HYLS1 (299 aa).

A Phosphoserine modification is found at Ser179.

This sequence belongs to the HYLS1 family.

Its subcellular location is the cytoplasm. The protein resides in the cell projection. The protein localises to the cilium. It is found in the cytoskeleton. It localises to the microtubule organizing center. Its subcellular location is the centrosome. The protein resides in the centriole. Functionally, plays a role in ciliogenesis. The chain is Centriolar and ciliogenesis-associated protein HYLS1 from Homo sapiens (Human).